A 422-amino-acid chain; its full sequence is Nucleoside transporter 1 (422 aa).

Over 1 to 38 (MSTGKESSKAYADIESRGDYKDDGKKGSTLSSKQHFML) the chain is Cytoplasmic. Residues 39–59 (SLTFILIGLSSLNVWNTALGL) traverse the membrane as a helical segment. W53 provides a ligand contact to inosine. At 60–63 (NINF) the chain is on the extracellular side. A helical transmembrane segment spans residues 64-82 (KYNTFQITGLVCSSIVALF). Residues 83–87 (VEIPK) are Cytoplasmic-facing. Residues 88 to 107 (IMLPFLLGGLSILCAGFQIS) traverse the membrane as a helical segment. The Extracellular segment spans residues 108–116 (HSFFTDTQF). Residues 117–139 (DTYCLVAFIVIGVVAGLAQTIAF) form a helical membrane-spanning segment. Residue Q135 coordinates inosine. Residues 140-149 (NIGSTMEDNM) lie on the Cytoplasmic side of the membrane. The helical transmembrane segment at 150-174 (GGYMSAGIGISGVFIFVINLLLDQF) threads the bilayer. At 175–185 (VSPEKHYGVNK) the chain is on the extracellular side. A helical membrane pass occupies residues 186-208 (AKLLYLYIICELCLILAIVFCVC). Over 209–241 (NLDLTNKNNKKDEENKENNATLSYMELFKDSYK) the chain is Cytoplasmic. The chain crosses the membrane as a helical span at residues 242-265 (AILTMFLVNWLTLQLFPGVGHKKW). Residues 266 to 274 (QESHNISDY) lie on the Extracellular side of the membrane. The helical transmembrane segment at 275–294 (NVTIIVGMFQVFDFLSRYPP) threads the bilayer. Inosine contacts are provided by D287 and R291. The Cytoplasmic segment spans residues 295–309 (NLTHIKIFKNFTFSL). The chain crosses the membrane as a helical span at residues 310–330 (NKLLVANSLRLLFIPWFILNA). At 331 to 338 (CVDHPFFK) the chain is on the extracellular side. The chain crosses the membrane as a helical span at residues 339-362 (NIVQQCVCMAMLAFTNGWFNTVPF). Residues 363–374 (LVFVKELKKAKK) are Cytoplasmic-facing. Residues 375-397 (KKEIEIISTFLVIAMFVGLFCGI) traverse the membrane as a helical segment. The Extracellular segment spans residues 398 to 422 (WTTYIYNLFNIVLPKPDLPPIDVTQ).

It belongs to the SLC29A/ENT transporter (TC 2.A.57) family.

The protein localises to the cell membrane. It carries out the reaction inosine(in) = inosine(out). The enzyme catalyses adenosine(in) = adenosine(out). The catalysed reaction is hypoxanthine(out) = hypoxanthine(in). It catalyses the reaction guanosine(in) = guanosine(out). It carries out the reaction guanine(out) = guanine(in). The enzyme catalyses thymidine(in) = thymidine(out). The catalysed reaction is uridine(out) = uridine(in). It catalyses the reaction uracil(in) = uracil(out). It carries out the reaction thymine(out) = thymine(in). The enzyme catalyses adenine(out) = adenine(in). The catalysed reaction is cytosine(out) = cytosine(in). It catalyses the reaction xanthine(out) = xanthine(in). With respect to regulation, GSK4 (5-methyl-N-[2-(2-oxo-1-azepanyl)ethyl]-2-phenyl-1,3-oxazole-4-carbox-amide) disrupts the transport activity at 500 nM. Inhibited partially by 10 uM dipyridamole. Inhibited partially by N,N'-1,3-benzothiazole-2,6-diyldi(2-furamide), 2-bromo-N-(4-[1,3]oxazolo[4,5-b]pyridin-2-ylphenyl)benzamide, 4-methyl-7-[(3,4,5-trimethoxybenzyl)oxy]-2H-chromen-2-one, 2-(1-methyl-1H-indol-3-yl)-2-oxo-N-[4-(pyrrolidin-1-ylcarbonyl)phenyl]acet amide and 2-[2-(2-methylphenyl)vinyl]-4(3H)-quinazolinone. Sodium-independent nucleoside and nucleobase transporter with a broad substrate specificity. Plays a key role in the utilization of host purine sources by P.falciparum during intraerythrocytic development enabling parasite growth in the presence of physiological concentrations of adenosine, inosine, guanine, guanosine, xanthine and hypoxanthine. Essential for parasite transition from ring to trophozoite or from trophozoite to schizont stage but not for erythrocyte invasion by merozoites. The sequence is that of Nucleoside transporter 1 from Plasmodium falciparum (isolate 3D7).